The primary structure comprises 168 residues: Crossover junction endodeoxyribonuclease RuvC (168 aa).

Residues D9, E70, and D145 contribute to the active site. Mg(2+)-binding residues include D9, E70, and D145.

It belongs to the RuvC family. As to quaternary structure, homodimer which binds Holliday junction (HJ) DNA. The HJ becomes 2-fold symmetrical on binding to RuvC with unstacked arms; it has a different conformation from HJ DNA in complex with RuvA. In the full resolvosome a probable DNA-RuvA(4)-RuvB(12)-RuvC(2) complex forms which resolves the HJ. Requires Mg(2+) as cofactor.

It is found in the cytoplasm. The catalysed reaction is Endonucleolytic cleavage at a junction such as a reciprocal single-stranded crossover between two homologous DNA duplexes (Holliday junction).. The RuvA-RuvB-RuvC complex processes Holliday junction (HJ) DNA during genetic recombination and DNA repair. Endonuclease that resolves HJ intermediates. Cleaves cruciform DNA by making single-stranded nicks across the HJ at symmetrical positions within the homologous arms, yielding a 5'-phosphate and a 3'-hydroxyl group; requires a central core of homology in the junction. The consensus cleavage sequence is 5'-(A/T)TT(C/G)-3'. Cleavage occurs on the 3'-side of the TT dinucleotide at the point of strand exchange. HJ branch migration catalyzed by RuvA-RuvB allows RuvC to scan DNA until it finds its consensus sequence, where it cleaves and resolves the cruciform DNA. This Chlamydia felis (strain Fe/C-56) (Chlamydophila felis) protein is Crossover junction endodeoxyribonuclease RuvC.